We begin with the raw amino-acid sequence, 544 residues long: Phosphoacetylglucosamine mutase (544 aa).

Ser-66 serves as the catalytic Phosphoserine intermediate. Mg(2+) is bound by residues Ser-66, Asp-290, Asp-292, and Asp-294. Substrate contacts are provided by residues 387–389 (EAN), 512–516 (RASGT), and Arg-521.

The protein belongs to the phosphohexose mutase family. The cofactor is Mg(2+).

It carries out the reaction N-acetyl-alpha-D-glucosamine 1-phosphate = N-acetyl-D-glucosamine 6-phosphate. Its pathway is nucleotide-sugar biosynthesis; UDP-N-acetyl-alpha-D-glucosamine biosynthesis; N-acetyl-alpha-D-glucosamine 1-phosphate from alpha-D-glucosamine 6-phosphate (route I): step 2/2. In terms of biological role, catalyzes the conversion of GlcNAc-6-P into GlcNAc-1-P during the synthesis of uridine diphosphate/UDP-GlcNAc, which is a biosynthetic precursor of chitin and also supplies the amino sugars for N-linked oligosaccharides of glycoproteins. The chain is Phosphoacetylglucosamine mutase from Candida albicans (Yeast).